The primary structure comprises 675 residues: Methionine--tRNA ligase (675 aa).

The 'HIGH' region signature appears at 15-25 (PYANGPIHLGH). Residues cysteine 146, cysteine 149, cysteine 159, and cysteine 162 each contribute to the Zn(2+) site. Residues 332-336 (KMSKS) carry the 'KMSKS' region motif. Lysine 335 lines the ATP pocket. The tRNA-binding domain maps to 574-675 (DFAKIDLRVA…AGAKPGMRVK (102 aa)).

This sequence belongs to the class-I aminoacyl-tRNA synthetase family. MetG type 1 subfamily. As to quaternary structure, homodimer. It depends on Zn(2+) as a cofactor.

Its subcellular location is the cytoplasm. It catalyses the reaction tRNA(Met) + L-methionine + ATP = L-methionyl-tRNA(Met) + AMP + diphosphate. In terms of biological role, is required not only for elongation of protein synthesis but also for the initiation of all mRNA translation through initiator tRNA(fMet) aminoacylation. The sequence is that of Methionine--tRNA ligase from Shewanella amazonensis (strain ATCC BAA-1098 / SB2B).